A 399-amino-acid polypeptide reads, in one-letter code: MNGNEFGRLFRMTTYGESHGEAMGCTVSGVPAGVELSEEEIQKDLDRRKPGQSMITTSRGEPDKVTINSGIQDGYTTGTPIGMVIQNKDARSGKYEPFITAPRPSHGDYTYSAKFGTRNWGGGGRSSARETVNWVAAGGVAKQVLEQSDYDVQIKAHVCQIGDVEAGPVTFEDMLEHSEENEVRCADPEAAEEMRDVADQHQKEGDSIGGAIYFECRGVPSGLGAPRFDSFPSRLGQAMYSIPAVNDFEYGIGREARTTKGSEYTENWEFDEDGHPTPVGNDHGGIQGGITTGQPIYGEVSWHAPVSIPKTQETVDWETGEGKEITVTGRHDPVLPPRAVPVVEAMLACTVLDFMLLGGRINPDRLDGRPGEYDTDYHPSSPQNDPEDADTHAKTIDDD.

The interval 41–72 (IQKDLDRRKPGQSMITTSRGEPDKVTINSGIQ) is disordered. Position 48 (R48) interacts with NADP(+). FMN-binding positions include 125-127 (RSS), G288, 303-307 (HAPVS), and R330. Basic and acidic residues-rich tracts occupy residues 363 to 377 (PDRL…DTDY) and 389 to 399 (ADTHAKTIDDD). The segment at 363–399 (PDRLDGRPGEYDTDYHPSSPQNDPEDADTHAKTIDDD) is disordered.

Belongs to the chorismate synthase family. The cofactor is FMNH2.

It carries out the reaction 5-O-(1-carboxyvinyl)-3-phosphoshikimate = chorismate + phosphate. Its pathway is metabolic intermediate biosynthesis; chorismate biosynthesis; chorismate from D-erythrose 4-phosphate and phosphoenolpyruvate: step 7/7. In terms of biological role, catalyzes the anti-1,4-elimination of the C-3 phosphate and the C-6 proR hydrogen from 5-enolpyruvylshikimate-3-phosphate (EPSP) to yield chorismate, which is the branch point compound that serves as the starting substrate for the three terminal pathways of aromatic amino acid biosynthesis. This reaction introduces a second double bond into the aromatic ring system. The protein is Chorismate synthase of Haloarcula marismortui (strain ATCC 43049 / DSM 3752 / JCM 8966 / VKM B-1809) (Halobacterium marismortui).